Consider the following 353-residue polypeptide: tRNA N6-adenosine threonylcarbamoyltransferase (353 aa).

2 residues coordinate Fe cation: His-109 and His-113. Residues 136 to 140, Asp-169, Gly-182, Asp-186, and Asn-284 each bind substrate; that span reads TVSGG. Asp-312 contributes to the Fe cation binding site.

Belongs to the KAE1 / TsaD family. Fe(2+) is required as a cofactor.

The protein resides in the cytoplasm. The catalysed reaction is L-threonylcarbamoyladenylate + adenosine(37) in tRNA = N(6)-L-threonylcarbamoyladenosine(37) in tRNA + AMP + H(+). Functionally, required for the formation of a threonylcarbamoyl group on adenosine at position 37 (t(6)A37) in tRNAs that read codons beginning with adenine. Is involved in the transfer of the threonylcarbamoyl moiety of threonylcarbamoyl-AMP (TC-AMP) to the N6 group of A37, together with TsaE and TsaB. TsaD likely plays a direct catalytic role in this reaction. This chain is tRNA N6-adenosine threonylcarbamoyltransferase, found in Chlorobaculum tepidum (strain ATCC 49652 / DSM 12025 / NBRC 103806 / TLS) (Chlorobium tepidum).